We begin with the raw amino-acid sequence, 143 residues long: Hemoglobin cathodic subunit alpha (143 aa).

Residue S2 is modified to N-acetylserine. Positions S2–R143 constitute a Globin domain. H59 provides a ligand contact to O2. H89 is a binding site for heme b.

The protein belongs to the globin family. In terms of assembly, heterotetramer of two alpha chains and two beta chains. As to expression, red blood cells.

In terms of biological role, involved in oxygen transport from the gills to the various peripheral tissues. This chain is Hemoglobin cathodic subunit alpha, found in Conger conger (Conger eel).